The chain runs to 182 residues: Large ribosomal subunit protein uL5 (182 aa).

This sequence belongs to the universal ribosomal protein uL5 family. As to quaternary structure, part of the 50S ribosomal subunit; part of the 5S rRNA/L5/L18/L25 subcomplex. Contacts the 5S rRNA and the P site tRNA. Forms a bridge to the 30S subunit in the 70S ribosome.

In terms of biological role, this is one of the proteins that bind and probably mediate the attachment of the 5S RNA into the large ribosomal subunit, where it forms part of the central protuberance. In the 70S ribosome it contacts protein S13 of the 30S subunit (bridge B1b), connecting the 2 subunits; this bridge is implicated in subunit movement. Contacts the P site tRNA; the 5S rRNA and some of its associated proteins might help stabilize positioning of ribosome-bound tRNAs. The protein is Large ribosomal subunit protein uL5 of Nostoc sp. (strain PCC 7120 / SAG 25.82 / UTEX 2576).